We begin with the raw amino-acid sequence, 513 residues long: GMP synthase [glutamine-hydrolyzing] (513 aa).

The 190-residue stretch at 9–198 (LILVLDFGSQ…VRRVCDCIGE (190 aa)) folds into the Glutamine amidotransferase type-1 domain. Cysteine 86 serves as the catalytic Nucleophile. Active-site residues include histidine 172 and glutamate 174. The GMPS ATP-PPase domain occupies 199–388 (WSMENFIEIE…LGIPEHLVWR (190 aa)). 226 to 232 (SGGVDSS) contacts ATP.

In terms of assembly, homodimer.

The catalysed reaction is XMP + L-glutamine + ATP + H2O = GMP + L-glutamate + AMP + diphosphate + 2 H(+). It participates in purine metabolism; GMP biosynthesis; GMP from XMP (L-Gln route): step 1/1. In terms of biological role, catalyzes the synthesis of GMP from XMP. The chain is GMP synthase [glutamine-hydrolyzing] from Staphylococcus saprophyticus subsp. saprophyticus (strain ATCC 15305 / DSM 20229 / NCIMB 8711 / NCTC 7292 / S-41).